We begin with the raw amino-acid sequence, 181 residues long: Probable nicotinate-nucleotide adenylyltransferase (181 aa).

It belongs to the NadD family.

The catalysed reaction is nicotinate beta-D-ribonucleotide + ATP + H(+) = deamido-NAD(+) + diphosphate. It participates in cofactor biosynthesis; NAD(+) biosynthesis; deamido-NAD(+) from nicotinate D-ribonucleotide: step 1/1. Functionally, catalyzes the reversible adenylation of nicotinate mononucleotide (NaMN) to nicotinic acid adenine dinucleotide (NaAD). The protein is Probable nicotinate-nucleotide adenylyltransferase of Campylobacter fetus subsp. fetus (strain 82-40).